Consider the following 261-residue polypeptide: Small ribosomal subunit protein uS2 (261 aa).

The interval 224-261 is disordered; that stretch reads GKQGQDDSEDVEKEMADKAAAENDDEESIEEVVEKSED. The segment covering 245–254 has biased composition (acidic residues); sequence ENDDEESIEE.

This sequence belongs to the universal ribosomal protein uS2 family.

This Lactobacillus gasseri (strain ATCC 33323 / DSM 20243 / BCRC 14619 / CIP 102991 / JCM 1131 / KCTC 3163 / NCIMB 11718 / NCTC 13722 / AM63) protein is Small ribosomal subunit protein uS2.